A 426-amino-acid chain; its full sequence is Adenylosuccinate synthetase (426 aa).

Residues 11–17 (GDEGKGK) and 39–41 (GHT) contribute to the GTP site. Asp12 (proton acceptor) is an active-site residue. Mg(2+) is bound by residues Asp12 and Gly39. Residues 12–15 (DEGK), 37–40 (NAGH), Thr130, Arg144, Asn226, Thr241, and Arg305 each bind IMP. The active-site Proton donor is His40. 301–307 (VTTGRKR) is a binding site for substrate. GTP is bound by residues Arg307, 333-335 (KLD), and 415-417 (GTG).

The protein belongs to the adenylosuccinate synthetase family. Homodimer. Mg(2+) serves as cofactor.

It is found in the cytoplasm. The catalysed reaction is IMP + L-aspartate + GTP = N(6)-(1,2-dicarboxyethyl)-AMP + GDP + phosphate + 2 H(+). It functions in the pathway purine metabolism; AMP biosynthesis via de novo pathway; AMP from IMP: step 1/2. Its function is as follows. Plays an important role in the de novo pathway and in the salvage pathway of purine nucleotide biosynthesis. Catalyzes the first committed step in the biosynthesis of AMP from IMP. The protein is Adenylosuccinate synthetase of Meyerozyma guilliermondii (strain ATCC 6260 / CBS 566 / DSM 6381 / JCM 1539 / NBRC 10279 / NRRL Y-324) (Yeast).